A 500-amino-acid chain; its full sequence is NAD(P)H-quinone oxidoreductase chain 4, chloroplastic (500 aa).

14 helical membrane passes run 4-24 (FPWL…IFFL), 35-55 (YTIA…CYHF), 87-107 (LGSI…AWPV), 111-131 (SQLF…LFSS), 134-154 (LLLF…LLSM), 167-187 (FILY…GMGL), 211-231 (ILLY…IPLH), 242-262 (HYST…YGLI), 272-292 (AHYL…IYAA), 313-333 (MGFI…GAIL), 334-354 (QILS…TACD), 386-406 (LALP…GLIT), 417-437 (LITF…LSML), and 462-482 (LFLL…PDFV).

It belongs to the complex I subunit 4 family.

It localises to the plastid. The protein resides in the chloroplast thylakoid membrane. It catalyses the reaction a plastoquinone + NADH + (n+1) H(+)(in) = a plastoquinol + NAD(+) + n H(+)(out). The enzyme catalyses a plastoquinone + NADPH + (n+1) H(+)(in) = a plastoquinol + NADP(+) + n H(+)(out). In Saccharum officinarum (Sugarcane), this protein is NAD(P)H-quinone oxidoreductase chain 4, chloroplastic.